The following is a 394-amino-acid chain: Peroxisomal membrane protein PEX25 (394 aa).

Residues 1-25 (MSQFGTTDIVSGSETPPYSGASYQD) are compositionally biased toward polar residues. Residues 1–65 (MSQFGTTDIV…SRSDDEDSQA (65 aa)) are disordered. Residues 1–366 (MSQFGTTDIV…LNLKTPKGTY (366 aa)) are Cytoplasmic-facing. The segment covering 51 to 65 (SHTESSRSDDEDSQA) has biased composition (basic and acidic residues). Residues Ser58, Ser63, and Ser289 each carry the phosphoserine modification. The helical transmembrane segment at 367-383 (AVLSLGSGLTGLVKLWI) threads the bilayer. Residues 384–394 (TTKRSLCSSKD) lie on the Lumenal side of the membrane.

As to quaternary structure, homooligomer. Interacts with PEX27 and PEX34.

It is found in the peroxisome membrane. In terms of biological role, required for regulation of peroxisome size and maintenance. Has a role in the import of peroxisomal matrix proteins. Imports RHO1 into the peroxisome. Also promotes peroxisome division and biogenesis. The protein is Peroxisomal membrane protein PEX25 (PEX25) of Saccharomyces cerevisiae (strain ATCC 204508 / S288c) (Baker's yeast).